We begin with the raw amino-acid sequence, 360 residues long: Decorin (360 aa).

The N-terminal stretch at methionine 1 to alanine 16 is a signal peptide. A propeptide spanning residues glycine 17 to glutamate 30 is cleaved from the precursor. Serine 34 is a glycosylation site (O-linked (Xyl...) (glycosaminoglycan) serine). Disulfide bonds link cysteine 55–cysteine 61 and cysteine 59–cysteine 68. LRR repeat units follow at residues glutamate 74 to isoleucine 94, threonine 95 to isoleucine 118, serine 119 to leucine 142, lysine 143 to isoleucine 163, threonine 164 to leucine 187, lysine 188 to isoleucine 213, threonine 214 to isoleucine 234, threonine 235 to isoleucine 258, serine 259 to leucine 282, valine 283 to isoleucine 305, serine 306 to valine 335, and glutamine 336 to lysine 360. Residue asparagine 212 is glycosylated (N-linked (GlcNAc...) asparagine). Residues asparagine 263 and asparagine 304 are each glycosylated (N-linked (GlcNAc...) asparagine). Cysteine 314 and cysteine 347 are disulfide-bonded.

It belongs to the small leucine-rich proteoglycan (SLRP) family. SLRP class I subfamily. Binds to type I and type II collagen, fibronectin and TGF-beta. Forms a ternary complex with MFAP2 and ELN. Interacts with DPT. The attached glycosaminoglycan chain can be either chondroitin 4-sulfate, chondroitin 6-sulfate or dermatan sulfate, depending upon the tissue of origin.

The protein localises to the secreted. It localises to the extracellular space. Its subcellular location is the extracellular matrix. In terms of biological role, may affect the rate of fibrils formation. This chain is Decorin (DCN), found in Bos taurus (Bovine).